Reading from the N-terminus, the 115-residue chain is Large ribosomal subunit protein bL20c (115 aa).

The protein belongs to the bacterial ribosomal protein bL20 family.

The protein localises to the plastid. Its subcellular location is the chloroplast. Binds directly to 23S ribosomal RNA and is necessary for the in vitro assembly process of the 50S ribosomal subunit. It is not involved in the protein synthesizing functions of that subunit. This chain is Large ribosomal subunit protein bL20c, found in Gnetum parvifolium (Small-leaved jointfir).